Consider the following 166-residue polypeptide: Phospholipase A2 inhibitor (166 aa).

The first 19 residues, 1 to 19 (MRLILLSGLLLLGIFLANG), serve as a signal peptide directing secretion. In terms of domain architecture, C-type lectin spans 46–161 (LRGAFLTVYK…CDDNLLVVCE (116 aa)). 2 N-linked (GlcNAc...) asparagine glycosylation sites follow: Asn61 and Asn122. Cystine bridges form between Cys83/Cys160 and Cys138/Cys152.

Belongs to the alpha-type phospholipase A2 inhibitor family. As to quaternary structure, homotrimer; non-covalently linked. Expressed by the liver.

It localises to the secreted. This phospholipase A2 inhibitor binds directly phospholipase A2 in the presence or absence of calcium. The polypeptide is Phospholipase A2 inhibitor (Bothrops alternatus (Urutu)).